We begin with the raw amino-acid sequence, 306 residues long: Ribonuclease Z (306 aa).

Residues H63, H65, D67, H68, H141, D211, and H269 each coordinate Zn(2+). D67 acts as the Proton acceptor in catalysis.

The protein belongs to the RNase Z family. In terms of assembly, homodimer. Requires Zn(2+) as cofactor.

The enzyme catalyses Endonucleolytic cleavage of RNA, removing extra 3' nucleotides from tRNA precursor, generating 3' termini of tRNAs. A 3'-hydroxy group is left at the tRNA terminus and a 5'-phosphoryl group is left at the trailer molecule.. Its function is as follows. Zinc phosphodiesterase, which displays some tRNA 3'-processing endonuclease activity. Probably involved in tRNA maturation, by removing a 3'-trailer from precursor tRNA. The polypeptide is Ribonuclease Z (Macrococcus caseolyticus (strain JCSC5402) (Macrococcoides caseolyticum)).